Here is a 100-residue protein sequence, read N- to C-terminus: Large ribosomal subunit protein bL27 (100 aa).

The propeptide occupies 1–9 (MLKMNLQLF).

The protein belongs to the bacterial ribosomal protein bL27 family. In terms of processing, the N-terminus is cleaved by ribosomal processing cysteine protease Prp.

The sequence is that of Large ribosomal subunit protein bL27 from Clostridium perfringens (strain ATCC 13124 / DSM 756 / JCM 1290 / NCIMB 6125 / NCTC 8237 / Type A).